The sequence spans 98 residues: Large ribosomal subunit protein uL23 (98 aa).

It belongs to the universal ribosomal protein uL23 family. In terms of assembly, part of the 50S ribosomal subunit. Contacts protein L29, and trigger factor when it is bound to the ribosome.

Its function is as follows. One of the early assembly proteins it binds 23S rRNA. One of the proteins that surrounds the polypeptide exit tunnel on the outside of the ribosome. Forms the main docking site for trigger factor binding to the ribosome. The chain is Large ribosomal subunit protein uL23 from Jannaschia sp. (strain CCS1).